Consider the following 1536-residue polypeptide: Ferredoxin-dependent glutamate synthase (1536 aa).

Cys-27 (for GATase activity) is an active-site residue. Positions 27-427 (CGVGFIANLN…PGQMLCVDLS (401 aa)) constitute a Glutamine amidotransferase type-2 domain. Residue 1105-1162 (LAEVHTTLVENSLREKVILRVDGGLRTGKDIIIAALMGAEEFGFGTVAMIATGCVMAR) coordinates FMN. Residues Cys-1158, Cys-1164, and Cys-1169 each coordinate [3Fe-4S] cluster.

This sequence belongs to the glutamate synthase family. In terms of assembly, monomer. Requires [3Fe-4S] cluster as cofactor. The cofactor is FAD. FMN serves as cofactor.

The protein localises to the plastid. The protein resides in the chloroplast stroma. It catalyses the reaction 2 oxidized [2Fe-2S]-[ferredoxin] + 2 L-glutamate = L-glutamine + 2 reduced [2Fe-2S]-[ferredoxin] + 2-oxoglutarate + 2 H(+). Its pathway is amino-acid biosynthesis; L-glutamate biosynthesis via GLT pathway; L-glutamate from 2-oxoglutarate and L-glutamine (ferredoxin route): step 1/1. It participates in energy metabolism; nitrogen metabolism. In Antithamnion sp. (Red alga), this protein is Ferredoxin-dependent glutamate synthase (gltB).